The following is a 156-amino-acid chain: RNA polymerase sigma factor SigS (156 aa).

The Polymerase core binding signature appears at 29 to 44 (EYYQLLLIKMWQLSQI). The segment at residues 126-145 (QFEIAEIMSLSLSTIKLIKT) is a DNA-binding region (H-T-H motif).

It belongs to the sigma-70 factor family.

Sigma factors are initiation factors that promote the attachment of RNA polymerase to specific initiation sites and are then released. Sigma-S contributes to the protection against external stress, thus playing a role in cellular fitness and survival. The chain is RNA polymerase sigma factor SigS (sigS) from Staphylococcus aureus (strain bovine RF122 / ET3-1).